Here is a 328-residue protein sequence, read N- to C-terminus: Carbonic anhydrase-related protein 10 (328 aa).

The 271-residue stretch at 31–301 (GWWAYKEVVQ…LNNRCIRTNI (271 aa)) folds into the Alpha-carbonic anhydrase domain.

This sequence belongs to the alpha-carbonic anhydrase family.

Does not have a catalytic activity. This Bos taurus (Bovine) protein is Carbonic anhydrase-related protein 10 (CA10).